A 304-amino-acid chain; its full sequence is N-acetyl-D-glucosamine kinase (304 aa).

ATP contacts are provided by residues glycine 4–lysine 11 and glycine 133–valine 140. The Zn(2+) site is built by histidine 157, cysteine 177, cysteine 179, and cysteine 184.

It belongs to the ROK (NagC/XylR) family. NagK subfamily.

It catalyses the reaction N-acetyl-D-glucosamine + ATP = N-acetyl-D-glucosamine 6-phosphate + ADP + H(+). It participates in cell wall biogenesis; peptidoglycan recycling. Its function is as follows. Catalyzes the phosphorylation of N-acetyl-D-glucosamine (GlcNAc) derived from cell-wall degradation, yielding GlcNAc-6-P. The protein is N-acetyl-D-glucosamine kinase of Yersinia pseudotuberculosis serotype IB (strain PB1/+).